Consider the following 190-residue polypeptide: 3-isopropylmalate dehydratase small subunit (190 aa).

This sequence belongs to the LeuD family. LeuD type 1 subfamily. As to quaternary structure, heterodimer of LeuC and LeuD.

The catalysed reaction is (2R,3S)-3-isopropylmalate = (2S)-2-isopropylmalate. It participates in amino-acid biosynthesis; L-leucine biosynthesis; L-leucine from 3-methyl-2-oxobutanoate: step 2/4. Its function is as follows. Catalyzes the isomerization between 2-isopropylmalate and 3-isopropylmalate, via the formation of 2-isopropylmaleate. The sequence is that of 3-isopropylmalate dehydratase small subunit from Staphylococcus aureus (strain MSSA476).